Here is a 212-residue protein sequence, read N- to C-terminus: Ribosomal RNA small subunit methyltransferase G (212 aa).

S-adenosyl-L-methionine-binding positions include Gly-72, Leu-77, 123–124 (VE), and Arg-138.

It belongs to the methyltransferase superfamily. RNA methyltransferase RsmG family.

Its subcellular location is the cytoplasm. It carries out the reaction guanosine(527) in 16S rRNA + S-adenosyl-L-methionine = N(7)-methylguanosine(527) in 16S rRNA + S-adenosyl-L-homocysteine. In terms of biological role, specifically methylates the N7 position of guanine in position 527 of 16S rRNA. The polypeptide is Ribosomal RNA small subunit methyltransferase G (Histophilus somni (strain 129Pt) (Haemophilus somnus)).